A 462-amino-acid polypeptide reads, in one-letter code: Sugar transporter ERD6-like 2 (462 aa).

Transmembrane regions (helical) follow at residues 23–43 (SGLL…GCAM), 70–90 (VMTL…ALVG), 96–116 (WISD…HDII), 123–143 (LFLG…IAEI), 156–176 (NQLL…FFHW), 178–198 (TLAL…FFIP), 261–281 (LIIG…AISA), 296–316 (IGTT…MLTV), 324–344 (LLMI…LSYY), 357–377 (VMLI…LGGL), 397–417 (LVTM…NFMI), and 423–443 (GTYF…WTLV).

This sequence belongs to the major facilitator superfamily. Sugar transporter (TC 2.A.1.1) family.

The protein localises to the membrane. Functionally, sugar transporter. This Arabidopsis thaliana (Mouse-ear cress) protein is Sugar transporter ERD6-like 2 (SUGTL3).